A 287-amino-acid polypeptide reads, in one-letter code: Shikimate kinase (287 aa).

87 to 97 (PLASGLKSSSA) is an ATP binding site.

Belongs to the GHMP kinase family. Archaeal shikimate kinase subfamily.

Its subcellular location is the cytoplasm. It carries out the reaction shikimate + ATP = 3-phosphoshikimate + ADP + H(+). Its pathway is metabolic intermediate biosynthesis; chorismate biosynthesis; chorismate from D-erythrose 4-phosphate and phosphoenolpyruvate: step 5/7. The protein is Shikimate kinase of Methanococcoides burtonii (strain DSM 6242 / NBRC 107633 / OCM 468 / ACE-M).